Here is a 239-residue protein sequence, read N- to C-terminus: Pyridoxine 5'-phosphate synthase (239 aa).

N7 is a binding site for 3-amino-2-oxopropyl phosphate. 9–10 (DH) contributes to the 1-deoxy-D-xylulose 5-phosphate binding site. R18 lines the 3-amino-2-oxopropyl phosphate pocket. The active-site Proton acceptor is H43. Residues R45 and H50 each contribute to the 1-deoxy-D-xylulose 5-phosphate site. E70 (proton acceptor) is an active-site residue. T100 contacts 1-deoxy-D-xylulose 5-phosphate. Residue H191 is the Proton donor of the active site. 3-amino-2-oxopropyl phosphate is bound by residues G192 and 213–214 (GH).

This sequence belongs to the PNP synthase family. As to quaternary structure, homooctamer; tetramer of dimers.

The protein localises to the cytoplasm. It carries out the reaction 3-amino-2-oxopropyl phosphate + 1-deoxy-D-xylulose 5-phosphate = pyridoxine 5'-phosphate + phosphate + 2 H2O + H(+). Its pathway is cofactor biosynthesis; pyridoxine 5'-phosphate biosynthesis; pyridoxine 5'-phosphate from D-erythrose 4-phosphate: step 5/5. In terms of biological role, catalyzes the complicated ring closure reaction between the two acyclic compounds 1-deoxy-D-xylulose-5-phosphate (DXP) and 3-amino-2-oxopropyl phosphate (1-amino-acetone-3-phosphate or AAP) to form pyridoxine 5'-phosphate (PNP) and inorganic phosphate. This chain is Pyridoxine 5'-phosphate synthase, found in Synechococcus sp. (strain JA-2-3B'a(2-13)) (Cyanobacteria bacterium Yellowstone B-Prime).